Here is a 104-residue protein sequence, read N- to C-terminus: Large ribosomal subunit protein uL24 (104 aa).

Belongs to the universal ribosomal protein uL24 family. Part of the 50S ribosomal subunit.

Its function is as follows. One of two assembly initiator proteins, it binds directly to the 5'-end of the 23S rRNA, where it nucleates assembly of the 50S subunit. Functionally, one of the proteins that surrounds the polypeptide exit tunnel on the outside of the subunit. The protein is Large ribosomal subunit protein uL24 of Herminiimonas arsenicoxydans.